We begin with the raw amino-acid sequence, 200 residues long: NAD(P)H dehydrogenase (quinone) (200 aa).

In terms of domain architecture, Flavodoxin-like spans 4-191; the sequence is VLVLYYSMYG…DIARFQGKHV (188 aa). FMN contacts are provided by residues 10 to 15 and 79 to 81; these read SMYGHI and TRF. Y12 is a binding site for NAD(+). W99 contacts substrate. FMN-binding positions include 114–120 and H135; that span reads STGTQHG.

Belongs to the WrbA family. Requires FMN as cofactor.

The catalysed reaction is a quinone + NADH + H(+) = a quinol + NAD(+). The enzyme catalyses a quinone + NADPH + H(+) = a quinol + NADP(+). The chain is NAD(P)H dehydrogenase (quinone) from Paraburkholderia phytofirmans (strain DSM 17436 / LMG 22146 / PsJN) (Burkholderia phytofirmans).